The sequence spans 394 residues: Serine palmitoyltransferase (394 aa).

Residues 111–112 (GF), S183, H211, and T239 contribute to the pyridoxal 5'-phosphate site. The residue at position 242 (K242) is an N6-(pyridoxal phosphate)lysine.

Belongs to the class-II pyridoxal-phosphate-dependent aminotransferase family. Requires pyridoxal 5'-phosphate as cofactor.

The enzyme catalyses L-serine + hexadecanoyl-CoA + H(+) = 3-oxosphinganine + CO2 + CoA. The protein operates within lipid metabolism; sphingolipid metabolism. Functionally, involved in de novo bacterial ceramide synthesis. Catalyzes the condensation of L-serine with palmitoyl-CoA (hexadecanoyl-CoA) to produce 3-oxosphinganine. Also capable of using alanine as substrate leading to the formation of 1-deoxysphinganine (1-deoxySa). Contributes to the levels of endogenous sphingolipids in its host. The protein is Serine palmitoyltransferase of Bacteroides ovatus (strain ATCC 8483 / DSM 1896 / JCM 5824 / BCRC 10623 / CCUG 4943 / NCTC 11153).